The chain runs to 455 residues: Venom prothrombin activator hopsarin-D (455 aa).

A signal peptide spans 1 to 20; the sequence is MAPQLLLCLILTFLWSVPEA. Positions 21-40 are excised as a propeptide; it reads ESNVFLKSKVANRFLQRTKR. Residues 41–86 form the Gla domain; that stretch reads SNSLFEEIRPGNIERECIEEKCSKEEAREVFEDNEKTETFWNVYVD. 11 positions are modified to 4-carboxyglutamate: Glu46, Glu47, Glu54, Glu56, Glu59, Glu60, Glu65, Glu66, Glu69, Glu72, and Glu75. Cys57 and Cys62 are oxidised to a cystine. Residues 86-121 enclose the EGF-like 1; calcium-binding domain; the sequence is DGDQCSSNPCHYHGTCKDGIGSYTCTCLPNYEGKNC. Cystine bridges form between Cys90–Cys101, Cys95–Cys110, Cys112–Cys121, Cys129–Cys140, Cys136–Cys149, Cys151–Cys164, Cys172–Cys328, Cys236–Cys252, Cys376–Cys390, and Cys401–Cys429. The O-linked (Hex...) serine glycan is linked to Ser92. An EGF-like 2 domain is found at 129–164; sequence CRAFNGNCWHFCKRVQSETQCSCAESYRLGVDGHSC. Residues 182 to 209 constitute a propeptide, activation peptide; the sequence is REASLPDFVQSQKATLLKKSDNPSPDIR. In terms of domain architecture, Peptidase S1 spans 210 to 453; that stretch reads IVNGMDSKLG…FIPWIKKIMS (244 aa). The active-site Charge relay system is the His251. Asn254 carries N-linked (GlcNAc...) asparagine glycosylation. Asp308 acts as the Charge relay system in catalysis. The active-site Charge relay system is Ser405.

It belongs to the peptidase S1 family. Snake venom subfamily. In terms of assembly, heterodimer of a light chain and a heavy chain; disulfide-linked. In terms of processing, the vitamin K-dependent, enzymatic carboxylation of some glutamate residues allows the modified protein to bind calcium. In terms of tissue distribution, expressed by the venom gland.

It localises to the secreted. The catalysed reaction is Selective cleavage of Arg-|-Thr and then Arg-|-Ile bonds in prothrombin to form thrombin.. In terms of biological role, snake prothrombin activator that attacks the hemostatic system of prey. This protein is functionally similar to blood coagulation factor Xa. The procoagulant activity of hopsarin-D is approximately 10-fold lower than that of trocarin-D and FXa. The chain is Venom prothrombin activator hopsarin-D from Hoplocephalus stephensii (Stephens's banded snake).